We begin with the raw amino-acid sequence, 341 residues long: L-threonine 3-dehydrogenase (341 aa).

A Zn(2+)-binding site is contributed by cysteine 38. Residues threonine 40 and histidine 43 each act as charge relay system in the active site. 6 residues coordinate Zn(2+): histidine 63, glutamate 64, cysteine 93, cysteine 96, cysteine 99, and cysteine 107. NAD(+) contacts are provided by residues isoleucine 175, aspartate 195, arginine 200, 262 to 264 (LGI), and 286 to 287 (IY).

The protein belongs to the zinc-containing alcohol dehydrogenase family. Homotetramer. The cofactor is Zn(2+).

The protein localises to the cytoplasm. The catalysed reaction is L-threonine + NAD(+) = (2S)-2-amino-3-oxobutanoate + NADH + H(+). The protein operates within amino-acid degradation; L-threonine degradation via oxydo-reductase pathway; glycine from L-threonine: step 1/2. In terms of biological role, catalyzes the NAD(+)-dependent oxidation of L-threonine to 2-amino-3-ketobutyrate. The protein is L-threonine 3-dehydrogenase of Salmonella choleraesuis (strain SC-B67).